The following is a 266-amino-acid chain: MKVGIDAGGTLIKIVQESQQGRSYETKLTTNISEVIAWLNANTFESISLTGGNAGVIAENLNVDATIFVEFDASSKGLGMLLKEQGHHIDEYIFANVGTGTSLHYFDGKQQRRVGGVGTGGGMIQGLGYLLSQITDYEALTNLAQSGDRDTIDLKVKHIYKDTEPPIPGELTAANFGNVLHNLDVDFSPANKLASVVGVVGEVITTMAITVARENKTENVVYIGSSFNNNPLLREVIEDYTVLRGFKPYYIENGAFSGALGAIYLN.

Residue 6-13 (DAGGTLIK) participates in ATP binding. The active-site Proton acceptor is Glu-70. ATP is bound by residues Thr-99, 121 to 125 (GGMIQ), Tyr-137, and Ser-225.

Belongs to the type II pantothenate kinase family. Homodimer.

The protein resides in the cytoplasm. The catalysed reaction is (R)-pantothenate + ATP = (R)-4'-phosphopantothenate + ADP + H(+). It participates in cofactor biosynthesis; coenzyme A biosynthesis; CoA from (R)-pantothenate: step 1/5. Functionally, catalyzes the phosphorylation of pantothenate (Pan), the first step in CoA biosynthesis. The sequence is that of Type II pantothenate kinase from Staphylococcus haemolyticus (strain JCSC1435).